Reading from the N-terminus, the 92-residue chain is PqqA binding protein (92 aa).

Belongs to the PqqD family. Monomer. Interacts with PqqE.

Its pathway is cofactor biosynthesis; pyrroloquinoline quinone biosynthesis. In terms of biological role, functions as a PqqA binding protein and presents PqqA to PqqE, in the pyrroloquinoline quinone (PQQ) biosynthetic pathway. In Xanthomonas oryzae pv. oryzae (strain MAFF 311018), this protein is PqqA binding protein.